Here is a 467-residue protein sequence, read N- to C-terminus: Probable endopeptidase p60 (467 aa).

Positions 1 to 27 are cleaved as a signal peptide; the sequence is MNMKKATIAATAGIAVTAFAAPTIASA. The LysM 1 domain maps to 28–71; sequence STVVVEAGDTLWGIAQSKGTTVDAIKKANNLTTDKIVPGQKLQV. The 65-residue stretch at 79–143 folds into the SH3b domain; that stretch reads KAEKSVSATW…VNGKYLTDKA (65 aa). Disordered stretches follow at residues 154 to 199 and 247 to 348; these read KKET…QNAT and KTVA…GSTN. Low complexity predominate over residues 172–185; that stretch reads KQPTTQQTAPAPKA. The 44-residue stretch at 199–242 folds into the LysM 2 domain; sequence TTHNVKSGDTIWALSVKYGVSVQDIMSWNNLSSSSIYVGQKLAI. The span at 288–348 shows a compositional bias: low complexity; that stretch reads TEQQTTTKAP…NTNTNQGSTN (61 aa). A 7 X 2 AA tandem repeats of T-N region spans residues 330–343; sequence TNTNTNTNTNTNTN. One can recognise a NlpC/P60 domain in the interval 349–467; that stretch reads NASASALIAE…GKFLVGFGRV (119 aa). Residue Cys-379 is the Nucleophile of the active site. His-429 (proton acceptor) is an active-site residue. Asn-441 is a catalytic residue.

It belongs to the peptidase C40 family.

This major extracellular protein may be involved in the invasion of non-professional phagocytic cells by Listeria. The chain is Probable endopeptidase p60 (iap) from Listeria innocua serovar 6a (strain ATCC BAA-680 / CLIP 11262).